The chain runs to 407 residues: MAPVAGKKAKKGILERLNAGEVVIGDGGFVFALEKRGYVKAGPWTPEAAVEHPEAVRQLHREFLRAGSNVMQTFTFYASEDKLENRGNYVAEKISGQKVNEAACDIARQVADEGDALVAGGVSQTPSYLSCKSEVEVKKIFRQQLEVFMKKNVDFLIAEYFEHVEEAVWAVEALKASGKPVAATMCIGPEGDLHGVPPGECAVRLVKAGASIVGVNCHFDPSVSLQTVKLMKEGLEAARLKAYLMSQPLAYHTPDCGKQGFIDLPEFPFGLEPRVATRWDIQKYAREAYNLGVRYIGGCCGFEPYHIRAIAEELAPERGFLPPASEKHGSWGSGLDMHTKPWIRARARKEYWQNLRIASGRPYNPSMSRPDAWGVTKGAAELMQQKEATTEQQLRELFEKQKFKSAQ.

A Hcy-binding domain is found at K11–L314. Residues K40, K93, and K98 each carry the N6-succinyllysine modification. C217 contacts Zn(2+). N6-succinyllysine is present on residues K232 and K241. Zn(2+) is bound by residues C299 and C300. Residue S330 is modified to Phosphoserine. 2 positions are modified to N6-succinyllysine: K340 and K377.

In terms of assembly, homotetramer. Requires Zn(2+) as cofactor.

Its subcellular location is the cytoplasm. The protein localises to the cytosol. The protein resides in the nucleus. The enzyme catalyses L-homocysteine + glycine betaine = N,N-dimethylglycine + L-methionine. It participates in amine and polyamine degradation; betaine degradation; sarcosine from betaine: step 1/2. The protein operates within amino-acid biosynthesis; L-methionine biosynthesis via de novo pathway; L-methionine from L-homocysteine (BhmT route): step 1/1. Its function is as follows. Involved in the regulation of homocysteine metabolism. Converts betaine and homocysteine to dimethylglycine and methionine, respectively. This reaction is also required for the irreversible oxidation of choline. The chain is Betaine--homocysteine S-methyltransferase 1 (Bhmt) from Mus musculus (Mouse).